The sequence spans 388 residues: Probable tRNA sulfurtransferase (388 aa).

The THUMP domain maps to 55 to 162 (VTLDDKLKKI…PEGVLIFTDR (108 aa)). Residues 180–181 (LL), 205–206 (TF), Arg264, Gly286, and Gln295 contribute to the ATP site.

This sequence belongs to the ThiI family.

The protein resides in the cytoplasm. It catalyses the reaction [ThiI sulfur-carrier protein]-S-sulfanyl-L-cysteine + a uridine in tRNA + 2 reduced [2Fe-2S]-[ferredoxin] + ATP + H(+) = [ThiI sulfur-carrier protein]-L-cysteine + a 4-thiouridine in tRNA + 2 oxidized [2Fe-2S]-[ferredoxin] + AMP + diphosphate. The enzyme catalyses [ThiS sulfur-carrier protein]-C-terminal Gly-Gly-AMP + S-sulfanyl-L-cysteinyl-[cysteine desulfurase] + AH2 = [ThiS sulfur-carrier protein]-C-terminal-Gly-aminoethanethioate + L-cysteinyl-[cysteine desulfurase] + A + AMP + 2 H(+). It participates in cofactor biosynthesis; thiamine diphosphate biosynthesis. Functionally, catalyzes the ATP-dependent transfer of a sulfur to tRNA to produce 4-thiouridine in position 8 of tRNAs, which functions as a near-UV photosensor. Also catalyzes the transfer of sulfur to the sulfur carrier protein ThiS, forming ThiS-thiocarboxylate. This is a step in the synthesis of thiazole, in the thiamine biosynthesis pathway. The sulfur is donated as persulfide by IscS. The protein is Probable tRNA sulfurtransferase of Thermotoga maritima (strain ATCC 43589 / DSM 3109 / JCM 10099 / NBRC 100826 / MSB8).